We begin with the raw amino-acid sequence, 288 residues long: Bifunctional protein FolD (288 aa).

NADP(+)-binding positions include 166-168 (GAS) and isoleucine 232.

It belongs to the tetrahydrofolate dehydrogenase/cyclohydrolase family. In terms of assembly, homodimer.

It carries out the reaction (6R)-5,10-methylene-5,6,7,8-tetrahydrofolate + NADP(+) = (6R)-5,10-methenyltetrahydrofolate + NADPH. It catalyses the reaction (6R)-5,10-methenyltetrahydrofolate + H2O = (6R)-10-formyltetrahydrofolate + H(+). It functions in the pathway one-carbon metabolism; tetrahydrofolate interconversion. Functionally, catalyzes the oxidation of 5,10-methylenetetrahydrofolate to 5,10-methenyltetrahydrofolate and then the hydrolysis of 5,10-methenyltetrahydrofolate to 10-formyltetrahydrofolate. The protein is Bifunctional protein FolD of Erwinia tasmaniensis (strain DSM 17950 / CFBP 7177 / CIP 109463 / NCPPB 4357 / Et1/99).